Reading from the N-terminus, the 272-residue chain is Shikimate dehydrogenase (NADP(+)) (272 aa).

Residues 14–16 and threonine 61 each bind shikimate; that span reads SKS. Lysine 65 serves as the catalytic Proton acceptor. Glutamate 77 provides a ligand contact to NADP(+). The shikimate site is built by asparagine 86 and aspartate 102. NADP(+)-binding positions include 126–130, 149–154, and methionine 213; these read GAGGA and NRTASR. Tyrosine 215 serves as a coordination point for shikimate. Residue glycine 237 participates in NADP(+) binding.

The protein belongs to the shikimate dehydrogenase family. As to quaternary structure, homodimer.

It carries out the reaction shikimate + NADP(+) = 3-dehydroshikimate + NADPH + H(+). It functions in the pathway metabolic intermediate biosynthesis; chorismate biosynthesis; chorismate from D-erythrose 4-phosphate and phosphoenolpyruvate: step 4/7. Its function is as follows. Involved in the biosynthesis of the chorismate, which leads to the biosynthesis of aromatic amino acids. Catalyzes the reversible NADPH linked reduction of 3-dehydroshikimate (DHSA) to yield shikimate (SA). This Citrobacter koseri (strain ATCC BAA-895 / CDC 4225-83 / SGSC4696) protein is Shikimate dehydrogenase (NADP(+)).